We begin with the raw amino-acid sequence, 107 residues long: Large ribosomal subunit protein P2 (107 aa).

The tract at residues 86–107 (PAAAAAEAEEEDDDDMGFGLFD) is disordered. The segment covering 92-101 (EAEEEDDDDM) has biased composition (acidic residues).

It belongs to the eukaryotic ribosomal protein P1/P2 family. In terms of assembly, P1 and P2 exist as dimers at the large ribosomal subunit. Phosphorylated.

Plays an important role in the elongation step of protein synthesis. This Trypanosoma brucei brucei protein is Large ribosomal subunit protein P2.